The chain runs to 44 residues: Photosystem II reaction center protein K (44 aa).

Positions 1 to 7 (MTTLLLA) are excised as a propeptide. A helical membrane pass occupies residues 19-39 (IVDVLPVIPLLFLLLAFVWQA).

Belongs to the PsbK family. In terms of assembly, PSII is composed of 1 copy each of membrane proteins PsbA, PsbB, PsbC, PsbD, PsbE, PsbF, PsbH, PsbI, PsbJ, PsbK, PsbL, PsbM, PsbT, PsbX, PsbY, PsbZ, Psb30/Ycf12, at least 3 peripheral proteins of the oxygen-evolving complex and a large number of cofactors. It forms dimeric complexes.

It is found in the plastid. The protein resides in the chloroplast thylakoid membrane. One of the components of the core complex of photosystem II (PSII). PSII is a light-driven water:plastoquinone oxidoreductase that uses light energy to abstract electrons from H(2)O, generating O(2) and a proton gradient subsequently used for ATP formation. It consists of a core antenna complex that captures photons, and an electron transfer chain that converts photonic excitation into a charge separation. The chain is Photosystem II reaction center protein K from Tupiella akineta (Green alga).